The following is a 490-amino-acid chain: Glutamyl-tRNA(Gln) amidotransferase subunit A (490 aa).

Catalysis depends on charge relay system residues lysine 76 and serine 151. Residue serine 175 is the Acyl-ester intermediate of the active site.

Belongs to the amidase family. GatA subfamily. Heterotrimer of A, B and C subunits.

The enzyme catalyses L-glutamyl-tRNA(Gln) + L-glutamine + ATP + H2O = L-glutaminyl-tRNA(Gln) + L-glutamate + ADP + phosphate + H(+). Allows the formation of correctly charged Gln-tRNA(Gln) through the transamidation of misacylated Glu-tRNA(Gln) in organisms which lack glutaminyl-tRNA synthetase. The reaction takes place in the presence of glutamine and ATP through an activated gamma-phospho-Glu-tRNA(Gln). The chain is Glutamyl-tRNA(Gln) amidotransferase subunit A from Aromatoleum aromaticum (strain DSM 19018 / LMG 30748 / EbN1) (Azoarcus sp. (strain EbN1)).